The chain runs to 270 residues: Urease accessory protein UreD (270 aa).

It belongs to the UreD family. UreD, UreF and UreG form a complex that acts as a GTP-hydrolysis-dependent molecular chaperone, activating the urease apoprotein by helping to assemble the nickel containing metallocenter of UreC. The UreE protein probably delivers the nickel.

The protein resides in the cytoplasm. Required for maturation of urease via the functional incorporation of the urease nickel metallocenter. This is Urease accessory protein UreD from Beijerinckia indica subsp. indica (strain ATCC 9039 / DSM 1715 / NCIMB 8712).